The primary structure comprises 1130 residues: Sterol regulatory element-binding protein 2 (1130 aa).

The transcriptional activation (acidic) stretch occupies residues 1–50 (MDESSELGVLETMETLTELGDELTLGDIDEMLQFVSNQVGEFPDLFSEQL). At 1–470 (MDESSELGVL…VALGMVDRSR (470 aa)) the chain is on the cytoplasmic side. A disordered region spans residues 53–133 (SFPGGGSNGG…PQPQPQPPAQ (81 aa)). A compositionally biased stretch (gly residues) spans 55–64 (PGGGSNGGSG). Residues 83–93 (RSFSQVPLSTF) are compositionally biased toward polar residues. Low complexity predominate over residues 94 to 104 (SPSAASPQAPA). The span at 111-131 (PTPPRATPVLQPRPQPQPQPP) shows a compositional bias: pro residues. Residues 226–480 (QQVPVLVQPQ…ILLCVLTFLG (255 aa)) are interaction with LMNA. Residues 319–369 (ERRTTHNIIEKRYRSSINDKIIELKDLVMGTDAKMHKSGVLRKAIDYIKYL) form the bHLH domain. Residues 369–390 (LQQVNHKLRQENMVLKLANQKN) are leucine-zipper. A Glycyl lysine isopeptide (Lys-Gly) (interchain with G-Cter in SUMO2) cross-link involves residue Lys-453. Residues 471–491 (ILLCVLTFLGLSFNPLTSLLQ) form a helical membrane-spanning segment. At 492–522 (WGGAHNTDQHPYSGSGRSVLSLESGAGGWFD) the chain is on the lumenal side. Residues 523-543 (WMVPTLLLWLVNGVIVLSVFV) traverse the membrane as a helical segment. The Cytoplasmic portion of the chain corresponds to 544-1130 (KLLVHGEPVI…LGGGTAIAAS (587 aa)). A Phosphoserine modification is found at Ser-1087.

It belongs to the SREBP family. In terms of assembly, forms a tight complex with SCAP, the SCAP-SREBP complex, in the endoplasmic reticulum membrane and the Golgi apparatus. Interacts with PAQR3; the interaction anchors the SCAP-SREBP complex to the Golgi apparatus in low cholesterol conditions. Interacts (via C-terminal domain) with RNF139. As to quaternary structure, homodimer; efficient DNA binding of the soluble transcription factor fragment requires dimerization with another bHLH protein. Interacts with LMNA. In terms of processing, processed in the Golgi apparatus, releasing the protein from the membrane. At low cholesterol the SCAP-SREBP complex is recruited into COPII vesicles for export from the endoplasmic reticulum. In the Golgi, complex SREBPs are cleaved sequentially by site-1 (MBTPS1, S1P) and site-2 (MBTPS2, S2P) proteases. The first cleavage by site-1 protease occurs within the luminal loop, the second cleavage by site-2 protease occurs within the first transmembrane domain, releasing the transcription factor from the Golgi membrane. Apoptosis triggers cleavage by the cysteine proteases caspase-3 and caspase-7. Cleavage and activation is induced by mediated cholesterol efflux. Post-translationally, phosphorylated by AMPK, leading to suppress protein processing and nuclear translocation, and repress target gene expression. SCAP-free SREBF2 is ubiquitinated by the BCR(ARMC5) complex, leading to its degradation. In terms of processing, ubiquitinated; the nuclear form has a rapid turnover and is rapidly ubiquitinated and degraded by the proteasome in the nucleus.

The protein resides in the endoplasmic reticulum membrane. The protein localises to the golgi apparatus membrane. Its subcellular location is the cytoplasmic vesicle. It localises to the COPII-coated vesicle membrane. It is found in the nucleus. Activation by cleavage is down-regulated upon activation of SIRT3-dependent PRKAA1/AMPK-alpha signaling cascade which leads to inhibition of ATP-consuming lipogenesis to restore cellular energy balance. In terms of biological role, precursor of the transcription factor form (Processed sterol regulatory element-binding protein 2), which is embedded in the endoplasmic reticulum membrane. Low sterol concentrations promote processing of this form, releasing the transcription factor form that translocates into the nucleus and activates transcription of genes involved in cholesterol biosynthesis. Functionally, key transcription factor that regulates expression of genes involved in cholesterol biosynthesis. Binds to the sterol regulatory element 1 (SRE-1) (5'-ATCACCCCAC-3'). Has dual sequence specificity binding to both an E-box motif (5'-ATCACGTGA-3') and to SRE-1 (5'-ATCACCCCAC-3'). Regulates transcription of genes related to cholesterol synthesis pathway. The protein is Sterol regulatory element-binding protein 2 of Mus musculus (Mouse).